Consider the following 207-residue polypeptide: Large ribosomal subunit protein uL4 (207 aa).

Residues 49-78 form a disordered region; that stretch reads HAVKNRSAVSGGGRKPWRQKGTGRARQGSI.

It belongs to the universal ribosomal protein uL4 family. Part of the 50S ribosomal subunit.

Its function is as follows. One of the primary rRNA binding proteins, this protein initially binds near the 5'-end of the 23S rRNA. It is important during the early stages of 50S assembly. It makes multiple contacts with different domains of the 23S rRNA in the assembled 50S subunit and ribosome. Functionally, forms part of the polypeptide exit tunnel. This is Large ribosomal subunit protein uL4 from Streptococcus gordonii (strain Challis / ATCC 35105 / BCRC 15272 / CH1 / DL1 / V288).